The sequence spans 251 residues: Small ribosomal subunit protein uS3 (251 aa).

The 72-residue stretch at 22-93 folds into the KH type-2 domain; it reads LNEFFTRELA…GIAIYAERVE (72 aa). Residues 223 to 251 are disordered; it reads TVKSYKQTAEDETETDAPVEAEAEVEATA. A compositionally biased stretch (acidic residues) spans 232–251; sequence EDETETDAPVEAEAEVEATA.

It belongs to the universal ribosomal protein uS3 family. As to quaternary structure, component of the small ribosomal subunit. Mature ribosomes consist of a small (40S) and a large (60S) subunit. The 40S subunit contains about 32 different proteins and 1 molecule of RNA (18S). The 60S subunit contains 45 different proteins and 3 molecules of RNA (25S, 5.8S and 5S).

It is found in the cytoplasm. Functionally, component of the ribosome, a large ribonucleoprotein complex responsible for the synthesis of proteins in the cell. The small ribosomal subunit (SSU) binds messenger RNAs (mRNAs) and translates the encoded message by selecting cognate aminoacyl-transfer RNA (tRNA) molecules. The large subunit (LSU) contains the ribosomal catalytic site termed the peptidyl transferase center (PTC), which catalyzes the formation of peptide bonds, thereby polymerizing the amino acids delivered by tRNAs into a polypeptide chain. The nascent polypeptides leave the ribosome through a tunnel in the LSU and interact with protein factors that function in enzymatic processing, targeting, and the membrane insertion of nascent chains at the exit of the ribosomal tunnel. The protein is Small ribosomal subunit protein uS3 (RPS3) of Candida albicans (strain SC5314 / ATCC MYA-2876) (Yeast).